The following is a 346-amino-acid chain: Histone H1.8 (346 aa).

Low complexity-rich tracts occupy residues 1 to 23 (MAPG…SSRS) and 38 to 48 (PGGPSHSSLPV). Disordered stretches follow at residues 1 to 50 (MAPG…PVGR) and 121 to 346 (ATGS…RAEA). An H15 domain is found at 51–129 (RHPPVLRMVL…GATGSFKLVP (79 aa)). Residues 128 to 137 (VPKHKKKIQP) are compositionally biased toward basic residues. The segment covering 148–167 (RAGEAKGKGPKKPSEAKEDP) has biased composition (basic and acidic residues). A Nuclear localization signal motif is present at residues 164–179 (KEDPPNVGKVKKAAKR). Residues 172–182 (KVKKAAKRPAK) are compositionally biased toward basic residues. Composition is skewed to basic and acidic residues over residues 205 to 225 (KDTR…DKAM) and 251 to 262 (EAYRKTKAESKS). Basic residues predominate over residues 278-288 (TKKKVVAKAKA). Positions 298–309 (KAAAPAKGSGSK) are enriched in low complexity. A compositionally biased stretch (polar residues) spans 334 to 346 (ASSSKVSSQRAEA).

Belongs to the histone H1/H5 family. As to expression, oocyte-specific.

It localises to the cytoplasm. It is found in the nucleus. The protein resides in the chromosome. Its function is as follows. May play a key role in the control of gene expression during oogenesis and early embryogenesis, presumably through the perturbation of chromatin structure. Essential for meiotic maturation of germinal vesicle-stage oocytes. The somatic type linker histone H1c is rapidly replaced by H1oo in a donor nucleus transplanted into an oocyte. The greater mobility of H1oo as compared to H1c may contribute to this rapid replacement and increased instability of the embryonic chromatin structure. The rapid replacement of H1c with H1oo may play an important role in nuclear remodeling. The protein is Histone H1.8 of Homo sapiens (Human).